A 184-amino-acid chain; its full sequence is Holliday junction branch migration complex subunit RuvA (184 aa).

Residues 1–64 (MIRAIEGIIT…EDANLLYGFL (64 aa)) form a domain I region. Residues 65–144 (DTNEQKMFEM…SDESVPGYQN (80 aa)) form a domain II region. A region of interest (flexible linker) is located at residue Asn-144. The segment at 144–184 (NEALLALEALGFKREKIVKILPDLKSTSTSELVKEALKKLA) is domain III.

This sequence belongs to the RuvA family. In terms of assembly, homotetramer. Forms an RuvA(8)-RuvB(12)-Holliday junction (HJ) complex. HJ DNA is sandwiched between 2 RuvA tetramers; dsDNA enters through RuvA and exits via RuvB. An RuvB hexamer assembles on each DNA strand where it exits the tetramer. Each RuvB hexamer is contacted by two RuvA subunits (via domain III) on 2 adjacent RuvB subunits; this complex drives branch migration. In the full resolvosome a probable DNA-RuvA(4)-RuvB(12)-RuvC(2) complex forms which resolves the HJ.

The protein resides in the cytoplasm. In terms of biological role, the RuvA-RuvB-RuvC complex processes Holliday junction (HJ) DNA during genetic recombination and DNA repair, while the RuvA-RuvB complex plays an important role in the rescue of blocked DNA replication forks via replication fork reversal (RFR). RuvA specifically binds to HJ cruciform DNA, conferring on it an open structure. The RuvB hexamer acts as an ATP-dependent pump, pulling dsDNA into and through the RuvAB complex. HJ branch migration allows RuvC to scan DNA until it finds its consensus sequence, where it cleaves and resolves the cruciform DNA. This Campylobacter curvus (strain 525.92) protein is Holliday junction branch migration complex subunit RuvA.